Consider the following 201-residue polypeptide: Ribonuclease HII (201 aa).

The RNase H type-2 domain maps to 10-200; the sequence is LIEAGCDEAG…LGTDPQLEIP (191 aa). A divalent metal cation is bound by residues Asp-16, Glu-17, and Asp-108.

It belongs to the RNase HII family. The cofactor is Mn(2+). It depends on Mg(2+) as a cofactor.

The protein resides in the cytoplasm. The enzyme catalyses Endonucleolytic cleavage to 5'-phosphomonoester.. Endonuclease that specifically degrades the RNA of RNA-DNA hybrids. This chain is Ribonuclease HII, found in Phocaeicola vulgatus (strain ATCC 8482 / DSM 1447 / JCM 5826 / CCUG 4940 / NBRC 14291 / NCTC 11154) (Bacteroides vulgatus).